A 491-amino-acid polypeptide reads, in one-letter code: Aspartyl/glutamyl-tRNA(Asn/Gln) amidotransferase subunit B (491 aa).

It belongs to the GatB/GatE family. GatB subfamily. As to quaternary structure, heterotrimer of A, B and C subunits.

The enzyme catalyses L-glutamyl-tRNA(Gln) + L-glutamine + ATP + H2O = L-glutaminyl-tRNA(Gln) + L-glutamate + ADP + phosphate + H(+). The catalysed reaction is L-aspartyl-tRNA(Asn) + L-glutamine + ATP + H2O = L-asparaginyl-tRNA(Asn) + L-glutamate + ADP + phosphate + 2 H(+). Its function is as follows. Allows the formation of correctly charged Asn-tRNA(Asn) or Gln-tRNA(Gln) through the transamidation of misacylated Asp-tRNA(Asn) or Glu-tRNA(Gln) in organisms which lack either or both of asparaginyl-tRNA or glutaminyl-tRNA synthetases. The reaction takes place in the presence of glutamine and ATP through an activated phospho-Asp-tRNA(Asn) or phospho-Glu-tRNA(Gln). This chain is Aspartyl/glutamyl-tRNA(Asn/Gln) amidotransferase subunit B, found in Parasynechococcus marenigrum (strain WH8102).